Reading from the N-terminus, the 328-residue chain is Tetraacyldisaccharide 4'-kinase (328 aa).

55–62 is a binding site for ATP; the sequence is TAGGNGKT.

It belongs to the LpxK family.

It catalyses the reaction a lipid A disaccharide + ATP = a lipid IVA + ADP + H(+). It participates in glycolipid biosynthesis; lipid IV(A) biosynthesis; lipid IV(A) from (3R)-3-hydroxytetradecanoyl-[acyl-carrier-protein] and UDP-N-acetyl-alpha-D-glucosamine: step 6/6. Its function is as follows. Transfers the gamma-phosphate of ATP to the 4'-position of a tetraacyldisaccharide 1-phosphate intermediate (termed DS-1-P) to form tetraacyldisaccharide 1,4'-bis-phosphate (lipid IVA). The sequence is that of Tetraacyldisaccharide 4'-kinase from Escherichia coli O7:K1 (strain IAI39 / ExPEC).